Here is a 307-residue protein sequence, read N- to C-terminus: Elongation factor Ts (307 aa).

The tract at residues 80 to 83 is involved in Mg(2+) ion dislocation from EF-Tu; the sequence is TDFV.

This sequence belongs to the EF-Ts family.

The protein resides in the cytoplasm. Its function is as follows. Associates with the EF-Tu.GDP complex and induces the exchange of GDP to GTP. It remains bound to the aminoacyl-tRNA.EF-Tu.GTP complex up to the GTP hydrolysis stage on the ribosome. This chain is Elongation factor Ts, found in Bradyrhizobium sp. (strain ORS 278).